Reading from the N-terminus, the 437-residue chain is Trigger factor (437 aa).

The 86-residue stretch at 163 to 248 (SDRVIIDFEG…LNNVSEATLP (86 aa)) folds into the PPIase FKBP-type domain.

The protein belongs to the FKBP-type PPIase family. Tig subfamily.

Its subcellular location is the cytoplasm. The catalysed reaction is [protein]-peptidylproline (omega=180) = [protein]-peptidylproline (omega=0). Functionally, involved in protein export. Acts as a chaperone by maintaining the newly synthesized protein in an open conformation. Functions as a peptidyl-prolyl cis-trans isomerase. In Neisseria meningitidis serogroup C / serotype 2a (strain ATCC 700532 / DSM 15464 / FAM18), this protein is Trigger factor.